The following is a 257-amino-acid chain: NAD kinase (257 aa).

Asp46 (proton acceptor) is an active-site residue. NAD(+) is bound by residues 46-47 (DG), 116-117 (NE), Asp146, Ala154, 157-162 (TAYNLS), and Asn218.

This sequence belongs to the NAD kinase family. The cofactor is a divalent metal cation.

The protein localises to the cytoplasm. The enzyme catalyses NAD(+) + ATP = ADP + NADP(+) + H(+). Involved in the regulation of the intracellular balance of NAD and NADP, and is a key enzyme in the biosynthesis of NADP. Catalyzes specifically the phosphorylation on 2'-hydroxyl of the adenosine moiety of NAD to yield NADP. The protein is NAD kinase of Brucella melitensis biotype 1 (strain ATCC 23456 / CCUG 17765 / NCTC 10094 / 16M).